Reading from the N-terminus, the 434-residue chain is D-amino acid dehydrogenase (434 aa).

3–17 (VLVLGSGVIGTASAY) serves as a coordination point for FAD.

The protein belongs to the DadA oxidoreductase family. Requires FAD as cofactor.

It catalyses the reaction a D-alpha-amino acid + A + H2O = a 2-oxocarboxylate + AH2 + NH4(+). It functions in the pathway amino-acid degradation; D-alanine degradation; NH(3) and pyruvate from D-alanine: step 1/1. Oxidative deamination of D-amino acids. The sequence is that of D-amino acid dehydrogenase from Pseudomonas entomophila (strain L48).